The chain runs to 85 residues: Large ribosomal subunit protein bL27 (85 aa).

Positions methionine 1 to glycine 22 are disordered.

Belongs to the bacterial ribosomal protein bL27 family.

The chain is Large ribosomal subunit protein bL27 from Vibrio atlanticus (strain LGP32) (Vibrio splendidus (strain Mel32)).